We begin with the raw amino-acid sequence, 552 residues long: Polypyrimidine tract-binding protein 3 (552 aa).

The residue at position 1 (methionine 1) is an N-acetylmethionine. Serine 17 bears the Phosphoserine mark. Polar residues predominate over residues 32–43 (MNSSTPSTANGN). Positions 32-55 (MNSSTPSTANGNDSKKFKRDRPPC) are disordered. 3 consecutive RRM domains span residues 59–143 (RVLH…NLPN), 182–258 (LRII…FSKL), and 358–432 (SVLL…LSKH). Lysine 65 is covalently cross-linked (Glycyl lysine isopeptide (Lys-Gly) (interchain with G-Cter in SUMO2)). Tyrosine 127 is subject to Phosphotyrosine. Threonine 138 bears the Phosphothreonine mark. Lysine 216 participates in a covalent cross-link: Glycyl lysine isopeptide (Lys-Gly) (interchain with G-Cter in SUMO2). The residue at position 423 (lysine 423) is an N6-acetyllysine. Residues 435-455 (VQLPREGQEDQGLTKDFSNSP) form a disordered region. Serine 454 carries the phosphoserine modification. One can recognise an RRM 4 domain in the interval 475 to 550 (ATLHLSNIPP…HHLRVSFSKS (76 aa)).

Interacts with THBS4 (via the acidic amphipathic C-terminus). Expressed in several hematopoietic cell lines examined.

Its function is as follows. RNA-binding protein that mediates pre-mRNA alternative splicing regulation. Plays a role in the regulation of cell proliferation, differentiation and migration. Positive regulator of EPO-dependent erythropoiesis. Participates in cell differentiation regulation by repressing tissue-specific exons. Promotes FAS exon 6 skipping. Binds RNA, preferentially to both poly(G) and poly(U). This is Polypyrimidine tract-binding protein 3 (PTBP3) from Homo sapiens (Human).